The following is a 364-amino-acid chain: UDP-N-acetylglucosamine--N-acetylmuramyl-(pentapeptide) pyrophosphoryl-undecaprenol N-acetylglucosamine transferase (364 aa).

Residues 10–12 (TGG), N124, S195, and Q295 each bind UDP-N-acetyl-alpha-D-glucosamine.

It belongs to the glycosyltransferase 28 family. MurG subfamily.

The protein localises to the cell membrane. It catalyses the reaction di-trans,octa-cis-undecaprenyl diphospho-N-acetyl-alpha-D-muramoyl-L-alanyl-D-glutamyl-meso-2,6-diaminopimeloyl-D-alanyl-D-alanine + UDP-N-acetyl-alpha-D-glucosamine = di-trans,octa-cis-undecaprenyl diphospho-[N-acetyl-alpha-D-glucosaminyl-(1-&gt;4)]-N-acetyl-alpha-D-muramoyl-L-alanyl-D-glutamyl-meso-2,6-diaminopimeloyl-D-alanyl-D-alanine + UDP + H(+). The protein operates within cell wall biogenesis; peptidoglycan biosynthesis. Functionally, cell wall formation. Catalyzes the transfer of a GlcNAc subunit on undecaprenyl-pyrophosphoryl-MurNAc-pentapeptide (lipid intermediate I) to form undecaprenyl-pyrophosphoryl-MurNAc-(pentapeptide)GlcNAc (lipid intermediate II). In Bacillus pumilus (strain SAFR-032), this protein is UDP-N-acetylglucosamine--N-acetylmuramyl-(pentapeptide) pyrophosphoryl-undecaprenol N-acetylglucosamine transferase.